The primary structure comprises 227 residues: Ribose-5-phosphate isomerase A (227 aa).

Substrate-binding positions include 26-29 (TGST), 82-85 (DGAD), and 95-98 (KGGG). The active-site Proton acceptor is the Glu104. Lys122 lines the substrate pocket.

The protein belongs to the ribose 5-phosphate isomerase family. As to quaternary structure, homodimer.

The catalysed reaction is aldehydo-D-ribose 5-phosphate = D-ribulose 5-phosphate. It participates in carbohydrate degradation; pentose phosphate pathway; D-ribose 5-phosphate from D-ribulose 5-phosphate (non-oxidative stage): step 1/1. In terms of biological role, catalyzes the reversible conversion of ribose-5-phosphate to ribulose 5-phosphate. The polypeptide is Ribose-5-phosphate isomerase A (Streptococcus pyogenes serotype M5 (strain Manfredo)).